The primary structure comprises 596 residues: Pentatricopeptide repeat-containing protein At1g80270, mitochondrial (596 aa).

Residues 1-69 (MFALSKVLRR…RALSSSAGTK (69 aa)) constitute a mitochondrion transit peptide. The segment at 62-119 (LSSSAGTKSDQEEDDLEDGFSELEGSKSGQGSTSSDEDEGKLSADEEEEEELDLIETD) is disordered. Composition is skewed to acidic residues over residues 72–82 (QEEDDLEDGFS) and 96–117 (SDED…DLIE). 9 PPR repeats span residues 228–262 (GEVL…GFPL), 263–296 (SGFT…NIKP), 297–331 (SLLT…GVEL), 332–366 (DFQT…SLEA), 367–397 (NRRA…CESK), 399–433 (YFEE…DRRA), 434–468 (SSST…GCRI), 469–503 (EATT…SHTK), and 505–539 (MMNS…GYTS).

It belongs to the PPR family. P subfamily.

It is found in the mitochondrion. The protein is Pentatricopeptide repeat-containing protein At1g80270, mitochondrial of Arabidopsis thaliana (Mouse-ear cress).